Reading from the N-terminus, the 153-residue chain is D-aminoacyl-tRNA deacylase (153 aa).

The Gly-cisPro motif, important for rejection of L-amino acids signature appears at 137-138; it reads GP.

It belongs to the DTD family. As to quaternary structure, homodimer.

It is found in the cytoplasm. The catalysed reaction is glycyl-tRNA(Ala) + H2O = tRNA(Ala) + glycine + H(+). It catalyses the reaction a D-aminoacyl-tRNA + H2O = a tRNA + a D-alpha-amino acid + H(+). Functionally, an aminoacyl-tRNA editing enzyme that deacylates mischarged D-aminoacyl-tRNAs. Also deacylates mischarged glycyl-tRNA(Ala), protecting cells against glycine mischarging by AlaRS. Acts via tRNA-based rather than protein-based catalysis; rejects L-amino acids rather than detecting D-amino acids in the active site. By recycling D-aminoacyl-tRNA to D-amino acids and free tRNA molecules, this enzyme counteracts the toxicity associated with the formation of D-aminoacyl-tRNA entities in vivo and helps enforce protein L-homochirality. This Methylococcus capsulatus (strain ATCC 33009 / NCIMB 11132 / Bath) protein is D-aminoacyl-tRNA deacylase.